Reading from the N-terminus, the 153-residue chain is MAKLKYKVEADPKNTARAMGRTLRISRKHAIELCRELSGMKLDAAVAYLNRVIALETPVPFKVHNKDLPHRKGKIGTHSGRFPQKASLEILQVLDNAKKNAEQKGLNTEKLRIKHISSNRGFTIKRYMPRAFGRASPKNQETIHIQVILEEFY.

It belongs to the universal ribosomal protein uL22 family. In terms of assembly, part of the 50S ribosomal subunit.

In terms of biological role, this protein binds specifically to 23S rRNA. It makes multiple contacts with different domains of the 23S rRNA in the assembled 50S subunit and ribosome. Functionally, the globular domain of the protein is located near the polypeptide exit tunnel on the outside of the subunit, while an extended beta-hairpin is found that lines the wall of the exit tunnel in the center of the 70S ribosome. This chain is Large ribosomal subunit protein uL22, found in Methanococcus maripaludis (strain C5 / ATCC BAA-1333).